The primary structure comprises 380 residues: Cell division protein ZipA (380 aa).

At 1 to 7 (MEDNFRN) the chain is on the periplasmic side. The helical transmembrane segment at 8 to 28 (VLIILSAIVITAIFIHGLWTL) threads the bilayer. Over 29-380 (RKQKNPYKLK…DRKSRIALVE (352 aa)) the chain is Cytoplasmic.

This sequence belongs to the ZipA family. Interacts with FtsZ via their C-terminal domains.

It localises to the cell inner membrane. Functionally, essential cell division protein that stabilizes the FtsZ protofilaments by cross-linking them and that serves as a cytoplasmic membrane anchor for the Z ring. Also required for the recruitment to the septal ring of downstream cell division proteins. In Colwellia psychrerythraea (strain 34H / ATCC BAA-681) (Vibrio psychroerythus), this protein is Cell division protein ZipA.